Here is a 428-residue protein sequence, read N- to C-terminus: CinA-like protein (428 aa).

It belongs to the CinA family.

The polypeptide is CinA-like protein (Mycobacterium leprae (strain TN)).